Reading from the N-terminus, the 397-residue chain is Serine protease MT3772 (397 aa).

The next 4 helical transmembrane spans lie at 9 to 29 (IAVL…GALG), 32 to 52 (LSFG…PHIV), 62 to 82 (LFAA…AGVV), and 102 to 122 (VIGV…LAMP). Cys214 and Cys395 are joined by a disulfide. The active-site Proton acceptor is His235. Asp264 is an active-site residue. The active-site Charge relay system is Ser343.

The protein belongs to the peptidase S1C family. As to quaternary structure, monomer.

It localises to the membrane. In terms of biological role, required for M.tuberculosis resistance to oxidative stress in addition to its role in resistance to acid, which is essential for virulence. In Mycobacterium tuberculosis (strain CDC 1551 / Oshkosh), this protein is Serine protease MT3772.